A 477-amino-acid chain; its full sequence is RNA pseudouridine synthase 4, mitochondrial (477 aa).

Residues 1–43 (MAKWRLATATLRRQLQSSSPTISTFKNPTKALSAAAHQSTRSY) constitute a mitochondrion transit peptide. The segment at 34 to 55 (AAAHQSTRSYSTTQTDDSRGKW) is disordered. The span at 36–48 (AHQSTRSYSTTQT) shows a compositional bias: polar residues. The region spanning 90 to 175 (TTALRWILRC…AKKESFQCSD (86 aa)) is the S4 RNA-binding domain. The active site involves aspartate 236.

This sequence belongs to the pseudouridine synthase RluA family.

The protein resides in the mitochondrion. It carries out the reaction a uridine in RNA = a pseudouridine in RNA. This is RNA pseudouridine synthase 4, mitochondrial from Arabidopsis thaliana (Mouse-ear cress).